The primary structure comprises 352 residues: Large ribosomal subunit protein uL5m (352 aa).

The disordered stretch occupies residues 28–109 (STQTGAGAAA…HPIQSPPSSD (82 aa)). A compositionally biased stretch (basic and acidic residues) spans 63–80 (EEDKKEFRPWKRAADRKA).

Belongs to the universal ribosomal protein uL5 family. Component of the mitochondrial large ribosomal subunit (mt-LSU). Mature N.crassa 74S mitochondrial ribosomes consist of a small (37S) and a large (54S) subunit. The 37S small subunit contains a 16S ribosomal RNA (16S mt-rRNA) and 32 different proteins. The 54S large subunit contains a 23S rRNA (23S mt-rRNA) and 42 different proteins. Unlike bacterial L5, uL5m does not bind zinc.

The protein resides in the mitochondrion. Functionally, component of the mitochondrial ribosome (mitoribosome), a dedicated translation machinery responsible for the synthesis of mitochondrial genome-encoded proteins, including at least some of the essential transmembrane subunits of the mitochondrial respiratory chain. The mitoribosomes are attached to the mitochondrial inner membrane and translation products are cotranslationally integrated into the membrane. The polypeptide is Large ribosomal subunit protein uL5m (mrpl7) (Neurospora crassa (strain ATCC 24698 / 74-OR23-1A / CBS 708.71 / DSM 1257 / FGSC 987)).